A 316-amino-acid polypeptide reads, in one-letter code: Probable porphobilinogen deaminase (316 aa).

Cys-234 carries the post-translational modification S-(dipyrrolylmethanemethyl)cysteine.

The protein belongs to the HMBS family. The cofactor is dipyrromethane.

It carries out the reaction 4 porphobilinogen + H2O = hydroxymethylbilane + 4 NH4(+). It participates in porphyrin-containing compound metabolism; protoporphyrin-IX biosynthesis; coproporphyrinogen-III from 5-aminolevulinate: step 2/4. Functionally, tetrapolymerization of the monopyrrole PBG into the hydroxymethylbilane pre-uroporphyrinogen in several discrete steps. This chain is Probable porphobilinogen deaminase, found in Methanosarcina barkeri (strain Fusaro / DSM 804).